The primary structure comprises 533 residues: Probable fucosyltransferase 5 (533 aa).

Residues 1–13 (MYQKFQISGKIVK) lie on the Cytoplasmic side of the membrane. The chain crosses the membrane as a helical; Signal-anchor for type II membrane protein span at residues 14-34 (TLGLKMKVLIAVSFGSLLFIL). The Lumenal portion of the chain corresponds to 35-533 (SYSNNFNNKL…YGGLKLYDEF (499 aa)). Asparagine 202, asparagine 227, asparagine 374, asparagine 396, and asparagine 475 each carry an N-linked (GlcNAc...) asparagine glycan.

Belongs to the glycosyltransferase 37 family. As to expression, expressed in roots, leaves, flowers and siliques.

The protein localises to the golgi apparatus. It is found in the golgi stack membrane. It functions in the pathway protein modification; protein glycosylation. May be involved in cell wall biosynthesis. May act as a fucosyltransferase. This chain is Probable fucosyltransferase 5 (FUT5), found in Arabidopsis thaliana (Mouse-ear cress).